A 329-amino-acid polypeptide reads, in one-letter code: MNKKTIAMLGAGSWGTAVAIHLAKIGHKTLLWSHNPQHVALMAEQHSNPAYLPGIPFPENLIPSDNLIECVQSANYVIIAVPSHAFAEIINKIPKPTQGLAWLTKGVDPASHELLSQLVASRFGVDFPIAVISGPSFAKEVARFLPTALTLASNNTNYQKKMHQLFHHDNIRVYLSDDLIGVQLCGAVKNILAIACGISDGLGYGANAKAALITRGLAEMTRLGLSMGARQDTFLGLAGVGDLVLTCTDDQSRNRRFGLLLGREVPIPEAEHQIGQVVEGKHNAAQICAIANKNRVEMPICEQINALLHGIVHAQEAVNNLMSRPAKEE.

The NADPH site is built by Ser-13, Trp-14, His-34, and Lys-105. Sn-glycerol 3-phosphate-binding residues include Lys-105, Gly-134, and Ser-136. Ala-138 is an NADPH binding site. Residues Lys-189, Asp-242, Ser-252, Arg-253, and Asn-254 each coordinate sn-glycerol 3-phosphate. The Proton acceptor role is filled by Lys-189. NADPH is bound at residue Arg-253. NADPH is bound by residues Val-277 and Glu-279.

This sequence belongs to the NAD-dependent glycerol-3-phosphate dehydrogenase family.

Its subcellular location is the cytoplasm. It carries out the reaction sn-glycerol 3-phosphate + NAD(+) = dihydroxyacetone phosphate + NADH + H(+). The enzyme catalyses sn-glycerol 3-phosphate + NADP(+) = dihydroxyacetone phosphate + NADPH + H(+). Its pathway is membrane lipid metabolism; glycerophospholipid metabolism. Catalyzes the reduction of the glycolytic intermediate dihydroxyacetone phosphate (DHAP) to sn-glycerol 3-phosphate (G3P), the key precursor for phospholipid synthesis. This is Glycerol-3-phosphate dehydrogenase [NAD(P)+] from Legionella pneumophila (strain Lens).